A 683-amino-acid polypeptide reads, in one-letter code: Tripartite terminase subunit 3 (683 aa).

The Walker A motif motif lies at I217 to T224. The Walker B motif signature appears at L312–E317. The active-site For ATPase activity is the E317. Residues D472, E546, and D658 each act as for nuclease activity in the active site.

Belongs to the herpesviridae TRM3 protein family. In terms of assembly, interacts with the terminase subunits TRM1 and TRM2. Interacts with portal protein.

The protein resides in the host nucleus. Component of the molecular motor that translocates viral genomic DNA in empty capsid during DNA packaging. Forms a tripartite terminase complex together with TRM1 and TRM2 in the host cytoplasm. Once the complex reaches the host nucleus, it interacts with the capsid portal vertex. This portal forms a ring in which genomic DNA is translocated into the capsid. TRM3 carries an RNase H-like nuclease activity that plays an important role for the cleavage of concatemeric viral DNA into unit length genomes. This chain is Tripartite terminase subunit 3, found in Saimiri sciureus (Common squirrel monkey).